Consider the following 602-residue polypeptide: Elongation factor 4 (602 aa).

The region spanning 8–190 (DLIRNFSIVA…AIVHRLPPPK (183 aa)) is the tr-type G domain. Residues 20 to 25 (DHGKST) and 137 to 140 (NKID) each bind GTP.

The protein belongs to the TRAFAC class translation factor GTPase superfamily. Classic translation factor GTPase family. LepA subfamily.

The protein localises to the cell inner membrane. The enzyme catalyses GTP + H2O = GDP + phosphate + H(+). Required for accurate and efficient protein synthesis under certain stress conditions. May act as a fidelity factor of the translation reaction, by catalyzing a one-codon backward translocation of tRNAs on improperly translocated ribosomes. Back-translocation proceeds from a post-translocation (POST) complex to a pre-translocation (PRE) complex, thus giving elongation factor G a second chance to translocate the tRNAs correctly. Binds to ribosomes in a GTP-dependent manner. This chain is Elongation factor 4, found in Cereibacter sphaeroides (strain ATCC 17029 / ATH 2.4.9) (Rhodobacter sphaeroides).